We begin with the raw amino-acid sequence, 210 residues long: Uracil phosphoribosyltransferase (210 aa).

5-phospho-alpha-D-ribose 1-diphosphate contacts are provided by residues arginine 78, arginine 103, and 130–138; that span reads DPMLATGGT. Uracil contacts are provided by residues isoleucine 193 and 198–200; that span reads GDA. Residue aspartate 199 coordinates 5-phospho-alpha-D-ribose 1-diphosphate.

This sequence belongs to the UPRTase family. Requires Mg(2+) as cofactor.

The enzyme catalyses UMP + diphosphate = 5-phospho-alpha-D-ribose 1-diphosphate + uracil. It participates in pyrimidine metabolism; UMP biosynthesis via salvage pathway; UMP from uracil: step 1/1. Allosterically activated by GTP. Its function is as follows. Catalyzes the conversion of uracil and 5-phospho-alpha-D-ribose 1-diphosphate (PRPP) to UMP and diphosphate. The chain is Uracil phosphoribosyltransferase from Xanthomonas campestris pv. campestris (strain 8004).